The following is a 766-amino-acid chain: Serine/threonine-protein kinase PLK4 (766 aa).

The Protein kinase domain occupies 14–267; the sequence is YEVQHLLGKG…LEAVLCHPFM (254 aa). ATP is bound by residues 20–28 and Lys-43; that span reads LGKGGFAIV. The active-site Proton acceptor is Asp-138. One can recognise a Cryptic POLO box 1 (CPB1) domain in the interval 379–496; it reads EDRISVPPLN…ARFVGLVKSK (118 aa). In terms of domain architecture, Cryptic POLO box 2 (CPB2) spans 497-600; it reads TPKVTYFSTL…GRRPVTDVQP (104 aa). Residues 658–737 form the POLO box domain; sequence PIKRINVPDV…IPNIQIKLKT (80 aa).

It belongs to the protein kinase superfamily. Ser/Thr protein kinase family. CDC5/Polo subfamily. As to quaternary structure, homodimer. Post-translationally, ubiquitinated by the SCF(Slimb) ubiquitin ligase complex; leading to its degradation by the proteasome during interphase and regulating centriole number and ensuring the block to centriole reduplication.

The protein localises to the cytoplasm. The protein resides in the cytoskeleton. It localises to the microtubule organizing center. It is found in the centrosome. Its subcellular location is the centriole. It catalyses the reaction L-seryl-[protein] + ATP = O-phospho-L-seryl-[protein] + ADP + H(+). The enzyme catalyses L-threonyl-[protein] + ATP = O-phospho-L-threonyl-[protein] + ADP + H(+). Its function is as follows. Serine/threonine-protein kinase that plays a central role in centriole duplication. Able to trigger procentriole formation on the surface of the mother centriole cylinder, using mother centriole as a platform, leading to the recruitment of centriole biogenesis proteins such as sas-6. When overexpressed, it is able to induce centrosome amplification through the simultaneous generation of multiple procentrioles adjoining each parental centriole during S phase. Centrosome amplification following overexpression can initiate tumorigenesis, highlighting the importance of centrosome regulation in cancers. This is Serine/threonine-protein kinase PLK4 (SAK) from Drosophila yakuba (Fruit fly).